A 687-amino-acid polypeptide reads, in one-letter code: Chloride channel protein ClC-Ka (687 aa).

5 helical membrane-spanning segments follow: residues 52–72 (FLVA…FAIG), 94–114 (LSWT…SQSI), 161–181 (IFLG…AYLG), 204–224 (AAAV…LFSI), and 236–256 (YWRG…LGVF). Ca(2+)-binding residues include Glu-259, Glu-261, Asp-278, and Glu-281. Helical transmembrane passes span 282–302 (IFFF…YLFC), 325–345 (PSYA…PGVG), 396–416 (FTIF…LILA), 417–437 (TTIP…AAIG), 458–478 (VNPI…SGAV), and 486–506 (LLAF…MAVL). Residues 507–687 (AANAISQNCQ…STLINPPAPK (181 aa)) lie on the Cytoplasmic side of the membrane. CBS domains lie at 551-609 (MNCN…QPAS) and 626-687 (CPTQ…PAPK).

Belongs to the chloride channel (TC 2.A.49) family. CLCNKA subfamily. As to quaternary structure, homodimer. Interacts with BSND. In terms of tissue distribution, expressed predominantly in the kidney. Expressed strongly in the cortical thick ascending limb and the distal convoluted tubule, with minor expression in the S3 segment of the proximal tubule and the cortical collecting tubule.

The protein localises to the basolateral cell membrane. It carries out the reaction chloride(in) = chloride(out). The catalysed reaction is bromide(in) = bromide(out). It catalyses the reaction nitrate(in) = nitrate(out). The enzyme catalyses iodide(out) = iodide(in). Its activity is regulated as follows. Activated by extracellular Ca(2+) and inhibited by extracellular acidic pH. In terms of biological role, anion-selective channel permeable to small monovalent anions with ion selectivity for chloride &gt; bromide &gt; nitrate &gt; iodide. Forms a homodimeric channel where each subunit has its own ion conduction pathway. Conducts double-barreled currents controlled by two types of gates, two fast gates that control each subunit independently and a slow common gate that opens and shuts off both subunits simultaneously. Assembles with the regulatory subunit BSND/Barttin for sorting at the basolateral plasma membrane domain. CLCNKA:BSND channels are activated upon membrane hyperpolarization mostly controlled by fast gating. Mediates transepithelial chloride transport from the lumen to interstitial compartment along the thin ascending limb of Henle's loop, contributing to generation of hypertonic medullary interstitium as a countercurrent system to achieve urine concentration. Conducts chloride currents in the stria vascularis of the inner ear to establish the endocochlear potential necessary for normal hearing. The sequence is that of Chloride channel protein ClC-Ka from Rattus norvegicus (Rat).